The sequence spans 211 residues: Histone H1t (211 aa).

Ala-1 carries the N-acetylalanine modification. Over residues 1–16 the composition is skewed to low complexity; sequence AETAPAAPADSVPASV. A disordered region spans residues 1 to 42; sequence AETAPAAPADSVPASVEKPPAKKRGKKPVGLTGTSRKAPSAS. The segment covering 32-42 has biased composition (polar residues); sequence TGTSRKAPSAS. The region spanning 39-112 is the H15 domain; the sequence is PSASVSKLIT…GASGSFKLSK (74 aa). Position 57 is a citrulline (Arg-57). Residues 101-211 are disordered; it reads GTGASGSFKL…TNPRKATNRK (111 aa). Residues 121–135 are compositionally biased toward basic residues; that stretch reads GKVKKPAAAKTKKLV. Ser-142 is modified (phosphoserine). Basic residues predominate over residues 147 to 156; the sequence is KANKRAKKSR. Thr-158 carries the post-translational modification Phosphothreonine. 2 positions are modified to phosphoserine: Ser-166 and Ser-181. Positions 176 to 189 are enriched in basic residues; the sequence is KQQRKSPAKARAAK.

It belongs to the histone H1/H5 family. In terms of processing, phosphorylated in early spermatids. Post-translationally, citrullination at Arg-57 (H1R54ci) by PADI4 takes place within the DNA-binding site of H1 and results in its displacement from chromatin and global chromatin decondensation, thereby promoting pluripotency and stem cell maintenance. In terms of tissue distribution, testis-specific.

It is found in the nucleus. The protein resides in the chromosome. Its function is as follows. Testis-specific histone H1 that forms less compacted chromatin compared to other H1 histone subtypes. Formation of more relaxed chromatin may be required to promote chromatin architecture required for proper chromosome regulation during meiosis, such as homologous recombination. Histones H1 act as linkers that bind to nucleosomes and compact polynucleosomes into a higher-order chromatin configuration. The chain is Histone H1t from Sus scrofa (Pig).